We begin with the raw amino-acid sequence, 921 residues long: Isoleucine--tRNA ligase (921 aa).

Positions Pro57–His67 match the 'HIGH' region motif. Glu552 contacts L-isoleucyl-5'-AMP. The 'KMSKS' region signature appears at Lys593–Ser597. Lys596 serves as a coordination point for ATP. 4 residues coordinate Zn(2+): Cys888, Cys891, Cys908, and Cys911.

The protein belongs to the class-I aminoacyl-tRNA synthetase family. IleS type 1 subfamily. Monomer. Zn(2+) is required as a cofactor.

The protein localises to the cytoplasm. The catalysed reaction is tRNA(Ile) + L-isoleucine + ATP = L-isoleucyl-tRNA(Ile) + AMP + diphosphate. Its function is as follows. Catalyzes the attachment of isoleucine to tRNA(Ile). As IleRS can inadvertently accommodate and process structurally similar amino acids such as valine, to avoid such errors it has two additional distinct tRNA(Ile)-dependent editing activities. One activity is designated as 'pretransfer' editing and involves the hydrolysis of activated Val-AMP. The other activity is designated 'posttransfer' editing and involves deacylation of mischarged Val-tRNA(Ile). This is Isoleucine--tRNA ligase from Bacillus cereus (strain B4264).